The primary structure comprises 216 residues: Probable nicotinate-nucleotide adenylyltransferase (216 aa).

The protein belongs to the NadD family.

It carries out the reaction nicotinate beta-D-ribonucleotide + ATP + H(+) = deamido-NAD(+) + diphosphate. It participates in cofactor biosynthesis; NAD(+) biosynthesis; deamido-NAD(+) from nicotinate D-ribonucleotide: step 1/1. Catalyzes the reversible adenylation of nicotinate mononucleotide (NaMN) to nicotinic acid adenine dinucleotide (NaAD). This is Probable nicotinate-nucleotide adenylyltransferase from Shewanella baltica (strain OS223).